The sequence spans 459 residues: Bifunctional protein GlmU (459 aa).

The pyrophosphorylase stretch occupies residues 1–229 (MTNYAIILAA…FDESLGVNDR (229 aa)). Residues 8–11 (LAAG), K22, Q72, and 77–78 (GT) each bind UDP-N-acetyl-alpha-D-glucosamine. Residue D102 participates in Mg(2+) binding. UDP-N-acetyl-alpha-D-glucosamine contacts are provided by G139, E154, N169, and N227. Mg(2+) is bound at residue N227. The linker stretch occupies residues 230–250 (VALATAESVMRRRINQKHMVN). The tract at residues 251–459 (GVSFVNPDAT…KRLPHHPQNK (209 aa)) is N-acetyltransferase. 2 residues coordinate UDP-N-acetyl-alpha-D-glucosamine: R332 and K350. H362 (proton acceptor) is an active-site residue. UDP-N-acetyl-alpha-D-glucosamine is bound by residues Y365 and N376. Residues A379, 385-386 (NY), S404, A422, and R439 each bind acetyl-CoA.

The protein in the N-terminal section; belongs to the N-acetylglucosamine-1-phosphate uridyltransferase family. This sequence in the C-terminal section; belongs to the transferase hexapeptide repeat family. Homotrimer. It depends on Mg(2+) as a cofactor.

The protein resides in the cytoplasm. The enzyme catalyses alpha-D-glucosamine 1-phosphate + acetyl-CoA = N-acetyl-alpha-D-glucosamine 1-phosphate + CoA + H(+). It carries out the reaction N-acetyl-alpha-D-glucosamine 1-phosphate + UTP + H(+) = UDP-N-acetyl-alpha-D-glucosamine + diphosphate. Its pathway is nucleotide-sugar biosynthesis; UDP-N-acetyl-alpha-D-glucosamine biosynthesis; N-acetyl-alpha-D-glucosamine 1-phosphate from alpha-D-glucosamine 6-phosphate (route II): step 2/2. The protein operates within nucleotide-sugar biosynthesis; UDP-N-acetyl-alpha-D-glucosamine biosynthesis; UDP-N-acetyl-alpha-D-glucosamine from N-acetyl-alpha-D-glucosamine 1-phosphate: step 1/1. It functions in the pathway bacterial outer membrane biogenesis; LPS lipid A biosynthesis. Its function is as follows. Catalyzes the last two sequential reactions in the de novo biosynthetic pathway for UDP-N-acetylglucosamine (UDP-GlcNAc). The C-terminal domain catalyzes the transfer of acetyl group from acetyl coenzyme A to glucosamine-1-phosphate (GlcN-1-P) to produce N-acetylglucosamine-1-phosphate (GlcNAc-1-P), which is converted into UDP-GlcNAc by the transfer of uridine 5-monophosphate (from uridine 5-triphosphate), a reaction catalyzed by the N-terminal domain. The chain is Bifunctional protein GlmU from Streptococcus gordonii (strain Challis / ATCC 35105 / BCRC 15272 / CH1 / DL1 / V288).